The chain runs to 525 residues: GMP synthase [glutamine-hydrolyzing] (525 aa).

A Glutamine amidotransferase type-1 domain is found at 11–200 (PVLVVDFGAQ…LTEIAGLEQN (190 aa)). Cysteine 88 serves as the catalytic Nucleophile. Residues histidine 174 and glutamate 176 contribute to the active site. One can recognise a GMPS ATP-PPase domain in the interval 201–399 (WTAANIAEEL…LGLPEEIVNR (199 aa)). 229–235 (SGGVDSA) is an ATP binding site.

As to quaternary structure, homodimer.

It carries out the reaction XMP + L-glutamine + ATP + H2O = GMP + L-glutamate + AMP + diphosphate + 2 H(+). The protein operates within purine metabolism; GMP biosynthesis; GMP from XMP (L-Gln route): step 1/1. In terms of biological role, catalyzes the synthesis of GMP from XMP. In Corynebacterium diphtheriae (strain ATCC 700971 / NCTC 13129 / Biotype gravis), this protein is GMP synthase [glutamine-hydrolyzing].